The chain runs to 846 residues: Rho GTPase-activating protein 12 (846 aa).

The region spanning 12–74 (PGQVYIEVEY…PAQYVKEVTR (63 aa)) is the SH3 domain. Polar residues predominate over residues 152 to 175 (LTHNNGKFNNDSHSPKVSSQNRTR). A disordered region spans residues 152–241 (LTHNNGKFNN…PPNQGRPDSP (90 aa)). A phosphoserine mark is found at Ser-165 and Ser-176. Over residues 191–200 (TSFSQEQSCD) the composition is skewed to polar residues. 3 positions are modified to phosphoserine: Ser-201, Ser-213, and Ser-215. Polar residues predominate over residues 224–234 (TEQIRATTPPN). 2 positions are modified to phosphothreonine: Thr-230 and Thr-231. Ser-240 is subject to Phosphoserine. Tyr-243 carries the phosphotyrosine modification. WW domains are found at residues 265 to 298 (IQIN…PPRW) and 358 to 391 (DYTN…LPKY). The disordered stretch occupies residues 293–316 (WKPPRWTRDASISKGDFQNPGDQE). Disordered stretches follow at residues 428–466 (DTND…DQEK) and 580–629 (ETDE…TKKN). Over residues 445–461 (NESSPSSPKHQDTASSP) the composition is skewed to polar residues. Residues 463–575 (DQEKYGLLNV…WFKVLSSTIN (113 aa)) form the PH domain. Positions 580–590 (ETDEGIEEEIP) are enriched in acidic residues. The residue at position 592 (Ser-592) is a Phosphoserine. Over residues 594–609 (GIEKHDKEKEQKDPKK) the composition is skewed to basic and acidic residues. The Rho-GAP domain occupies 656–844 (SNLANLCQRE…LILLELSSIF (189 aa)).

Its function is as follows. GTPase activator for the Rho-type GTPases by converting them to an inactive GDP-bound state. The chain is Rho GTPase-activating protein 12 (ARHGAP12) from Homo sapiens (Human).